Consider the following 348-residue polypeptide: Lipoyl synthase (348 aa).

Positions 55, 60, 66, 81, 85, 88, and 292 each coordinate [4Fe-4S] cluster. One can recognise a Radical SAM core domain in the interval 67–281; sequence WESREATFLI…SDEAYEIGFA (215 aa).

The protein belongs to the radical SAM superfamily. Lipoyl synthase family. The cofactor is [4Fe-4S] cluster.

The protein localises to the cytoplasm. It catalyses the reaction [[Fe-S] cluster scaffold protein carrying a second [4Fe-4S](2+) cluster] + N(6)-octanoyl-L-lysyl-[protein] + 2 oxidized [2Fe-2S]-[ferredoxin] + 2 S-adenosyl-L-methionine + 4 H(+) = [[Fe-S] cluster scaffold protein] + N(6)-[(R)-dihydrolipoyl]-L-lysyl-[protein] + 4 Fe(3+) + 2 hydrogen sulfide + 2 5'-deoxyadenosine + 2 L-methionine + 2 reduced [2Fe-2S]-[ferredoxin]. It participates in protein modification; protein lipoylation via endogenous pathway; protein N(6)-(lipoyl)lysine from octanoyl-[acyl-carrier-protein]: step 2/2. In terms of biological role, catalyzes the radical-mediated insertion of two sulfur atoms into the C-6 and C-8 positions of the octanoyl moiety bound to the lipoyl domains of lipoate-dependent enzymes, thereby converting the octanoylated domains into lipoylated derivatives. The protein is Lipoyl synthase of Corynebacterium efficiens (strain DSM 44549 / YS-314 / AJ 12310 / JCM 11189 / NBRC 100395).